The chain runs to 344 residues: 2-methyl-6-phytyl-1,4-hydroquinone methyltransferase, chloroplastic (344 aa).

The transit peptide at 1–62 (MACSMLNGVD…LTTVTKCTLS (62 aa)) directs the protein to the chloroplast. The Chloroplast intermembrane segment spans residues 63–313 (ASERPASQPR…PVHPLVFLYR (251 aa)). The tract at residues 121 to 130 (VVDVGGGTGF) is SAM motif I. Residues 166–179 (CRIIEGDAEDLPFP) are SAM motif II. Residues 207–220 (RVLKLGGKACLIGP) form an SAM motif III region. Residues 314-334 (FLLGALASTYYVLVPIYMWIK) traverse the membrane as a helical segment. The Stromal portion of the chain corresponds to 335–344 (DKIFPKGMPL).

Belongs to the class I-like SAM-binding methyltransferase superfamily. MPBQ/MBSQ MT family.

It is found in the plastid. Its subcellular location is the chloroplast inner membrane. It carries out the reaction 2-methyl-6-phytyl-1,4-benzene-1,4-diol + S-adenosyl-L-methionine = 2,3-dimethyl-6-phytylbenzene-1,4-diol + S-adenosyl-L-homocysteine + H(+). The catalysed reaction is 2-methyl-6-(all-trans-nonaprenyl)benzene-1,4-diol + S-adenosyl-L-methionine = plastoquinol-9 + S-adenosyl-L-homocysteine + H(+). It catalyses the reaction 6-geranylgeranyl-2-methylbenzene-1,4-diol + S-adenosyl-L-methionine = 6-geranylgeranyl-2,3-dimethylbenzene-1,4-diol + S-adenosyl-L-homocysteine + H(+). The protein operates within cofactor biosynthesis; tocopherol biosynthesis. Involved in a key methylation step in both tocopherols (vitamin E) and plastoquinone synthesis. Catalyzes the conversion of 2-methyl-6-phytyl-1,4-hydroquinone (MPBQ) to 2,3-dimethyl-6-phytyl-1,4-hydroquinone (DMPQ, a substrate for tocopherol cyclase), and 2-methyl-6-solanyl-1,4-benzoquinone (MSBQ) to plastoquinone. This chain is 2-methyl-6-phytyl-1,4-hydroquinone methyltransferase, chloroplastic, found in Spinacia oleracea (Spinach).